Reading from the N-terminus, the 462-residue chain is NAD(P) transhydrogenase subunit beta (462 aa).

The Periplasmic portion of the chain corresponds to 1 to 3 (MSG). Residues 4–24 (GLVTAAYIVAAILFIFSLAGL) form a helical membrane-spanning segment. The Cytoplasmic segment spans residues 25–45 (SKHETSRQGNNFGIAGMAIAL). The chain crosses the membrane as a helical span at residues 46-66 (IATIFGPDTGNVGWILLAMVI). At 67 to 82 (GGAIGIRLAKKVEMTE) the chain is on the periplasmic side. The helical transmembrane segment at 83-103 (MPELVAILHSFVGLAAVLVGF) threads the bilayer. Topologically, residues 104 to 115 (NSYLHHDAGMAP) are cytoplasmic. A helical transmembrane segment spans residues 116-136 (ILVNIHLTEVFLGIFIGAVTF). Topologically, residues 137 to 164 (TGSVVAFGKLCGKISSKPLMLPNRHKMN) are periplasmic. A helical transmembrane segment spans residues 165 to 185 (LAALVVSFLLLIVFVRTDSVG). Topologically, residues 186 to 188 (LQV) are cytoplasmic. Residues 189–209 (LALLIMTAIALVFGWHLVASI) form a helical membrane-spanning segment. Over 210 to 215 (GGADMP) the chain is Periplasmic. Residues 216–236 (VVVSMLNSYSGWAAAAAGFML) traverse the membrane as a helical segment. At 237–239 (SND) the chain is on the cytoplasmic side. The chain crosses the membrane as a helical span at residues 240–260 (LLIVTGALVGSSGAILSYIMC). At 261–308 (KAMNRSFISVIAGGFGTDGSSTGDDQEVGEHREITAEETAELLKNSHS) the chain is on the periplasmic side. A helical transmembrane segment spans residues 309–329 (VIITPGYGMAVAQAQYPVAEI). At 330 to 462 (TEKLRARGIN…ASVDAILKAL (133 aa)) the chain is on the cytoplasmic side.

Belongs to the PNT beta subunit family. As to quaternary structure, heterodimer of an alpha and a beta chain.

The protein resides in the cell inner membrane. The catalysed reaction is NAD(+) + NADPH + H(+)(in) = NADH + NADP(+) + H(+)(out). In terms of biological role, the transhydrogenation between NADH and NADP is coupled to respiration and ATP hydrolysis and functions as a proton pump across the membrane. This Escherichia coli O157:H7 protein is NAD(P) transhydrogenase subunit beta (pntB).